We begin with the raw amino-acid sequence, 61 residues long: Metallothionein-2B (61 aa).

Residue Met-1 is modified to N-acetylmethionine. The interval Met-1 to Cys-29 is beta. A divalent metal cation-binding residues include Cys-5, Cys-7, Cys-13, Cys-15, Cys-19, Cys-21, Cys-24, Cys-26, Cys-29, Cys-33, Cys-34, Cys-36, Cys-37, Cys-41, Cys-44, Cys-48, Cys-50, Cys-57, Cys-59, and Cys-60. The alpha stretch occupies residues Lys-30–Ala-61.

It belongs to the metallothionein superfamily. Type 1 family. Monomer.

Its function is as follows. Metallothioneins have a high content of cysteine residues that bind various heavy metals; these proteins are transcriptionally regulated by both heavy metals and glucocorticoids. The sequence is that of Metallothionein-2B (MT2B) from Sus scrofa (Pig).